Consider the following 524-residue polypeptide: M phase phosphoprotein 10 (524 aa).

Residues 85–92 carry the Nuclear localization signal 1 motif; the sequence is VKRFAKNP. Disordered regions lie at residues 100–243 and 259–283; these read KLAL…KLGK and KLKDLSEDEEAEIENKGNEKLSTHE. Positions 109–168 are enriched in acidic residues; that stretch reads DDIDEMDMDGFDSDDVDDEDKEIESNDSEGEDEEEEEEDEEEEEEEEEEEEEEKDGDNEG. A coiled-coil region spans residues 131 to 165; the sequence is IESNDSEGEDEEEEEEDEEEEEEEEEEEEEEKDGD. Basic and acidic residues predominate over residues 169-180; sequence IEDKFFKIKELE. Residues 181–191 are compositionally biased toward acidic residues; sequence EFLEEGEAEEY. Over residues 196-207 the composition is skewed to basic residues; the sequence is KNKKGVAQRKKQ. Residues 210–238 show a composition bias toward acidic residues; the sequence is SDDEDEEDDDDEEEDVEFDAFAGGDDEET. The stretch at 257–302 forms a coiled coil; the sequence is KMKLKDLSEDEEAEIENKGNEKLSTHERARLKLQSKIEQMEKANLD. Basic and acidic residues predominate over residues 271–283; sequence IENKGNEKLSTHE. The Nuclear localization signal 2 signature appears at 373-380; the sequence is GKREAKEL. Residues 479-524 form a disordered region; it reads KGDIKDESELTQEDRKRRRANKKRKFKAESANEPPKKALDTSTKNP. Basic and acidic residues predominate over residues 480–493; the sequence is GDIKDESELTQEDR. Basic residues predominate over residues 494–504; that stretch reads KRRRANKKRKF. A compositionally biased stretch (basic and acidic residues) spans 505 to 517; the sequence is KAESANEPPKKAL.

It belongs to the MPP10 family. Component of the ribosomal small subunit (SSU) processome. Interacts with THAL in the nucleus.

It localises to the nucleus. It is found in the nucleolus. In terms of biological role, involved in nucleolar processing of pre-18S ribosomal RNA. This Arabidopsis thaliana (Mouse-ear cress) protein is M phase phosphoprotein 10.